The following is a 561-amino-acid chain: (+)-alpha-pinene synthase TPS2FN (561 aa).

Residues arginine 276, aspartate 313, aspartate 317, arginine 455, and aspartate 458 each contribute to the (2E)-geranyl diphosphate site. The Mg(2+) site is built by aspartate 313 and aspartate 317. The DDXXD motif motif lies at 313-317 (DDIYD). Mg(2+) contacts are provided by aspartate 458, threonine 462, and glutamate 466.

It belongs to the terpene synthase family. Tpsb subfamily. Mg(2+) is required as a cofactor. Requires Mn(2+) as cofactor. As to expression, expressed in glandular trichomes two to four weeks after flowering onset.

It carries out the reaction (2E)-geranyl diphosphate = (1R,5R)-alpha-pinene + diphosphate. The catalysed reaction is (2E)-geranyl diphosphate = (4S)-limonene + diphosphate. It catalyses the reaction (2E)-geranyl diphosphate = sabinene + diphosphate. The enzyme catalyses (2E)-geranyl diphosphate = beta-phellandrene + diphosphate. It carries out the reaction (2E)-geranyl diphosphate = camphene + diphosphate. The catalysed reaction is (2E)-geranyl diphosphate = isoterpinolene + diphosphate. It functions in the pathway secondary metabolite biosynthesis; terpenoid biosynthesis. It participates in terpene metabolism; (-)-alpha-pinene biosynthesis; (-)-alpha-pinene from geranyl diphosphate: step 1/1. Functionally, involved in monoterpene (C10) olefins biosynthesis, constituants of cannabinoids and terpenoids-rich resins. Catalyzes mainly the conversion of (2E)-geranyl diphosphate to (+)-alpha-pinene, and also produces minor products such as camphene, sabinene, beta-phellandrene, (-)-limonene and isoterpinolene. The sequence is that of (+)-alpha-pinene synthase TPS2FN from Cannabis sativa (Hemp).